A 196-amino-acid chain; its full sequence is FKBP-type peptidyl-prolyl cis-trans isomerase SlyD (196 aa).

Residues 1–69 (MKVAKDLVVS…VAVGANDAYG (69 aa)) are PPIase first part. The 95-residue stretch at 1–95 (MKVAKDLVVS…GVDELQVGMR (95 aa)) folds into the PPIase FKBP-type domain. Residues 76 to 120 (VQRVPKDVFMGVDELQVGMRFLAETDQGPVPVEITAVEDDHVVVD) are IF-chaperone. Residues 129-151 (NLKFNVEVVAIREATEEELAHGH) form a PPIase second part region. Ni(2+) is bound by residues Cys-167, Cys-168, Cys-184, Cys-185, Cys-193, and Cys-195.

Belongs to the FKBP-type PPIase family. Monomer. Binds to a broad range of unrelated Tat signal sequences. Interacts with the hydrogenase nickel incorporation protein HypB.

Its subcellular location is the cytoplasm. It catalyses the reaction [protein]-peptidylproline (omega=180) = [protein]-peptidylproline (omega=0). Its function is as follows. Folding helper with both chaperone and peptidyl-prolyl cis-trans isomerase (PPIase) activities. Chaperone activity prevents aggregation of unfolded or partially folded proteins and promotes their correct folding. PPIases catalyze the cis-trans isomerization of Xaa-Pro bonds of peptides, which accelerates slow steps of protein folding and thus shortens the lifetime of intermediates. Both strategies lower the concentration of intermediates and increase the productivity and yield of the folding reaction. SlyD could be involved in Tat-dependent translocation, by binding to the Tat-type signal of folded proteins. Functionally, also involved in hydrogenase metallocenter assembly, probably by participating in the nickel insertion step. This function in hydrogenase biosynthesis requires chaperone activity and the presence of the metal-binding domain, but not PPIase activity. In Escherichia coli O157:H7, this protein is FKBP-type peptidyl-prolyl cis-trans isomerase SlyD (slyD).